We begin with the raw amino-acid sequence, 383 residues long: S-adenosylmethionine synthase (383 aa).

H15 is a binding site for ATP. A Mg(2+)-binding site is contributed by D17. Residue E43 participates in K(+) binding. L-methionine is bound by residues E56 and Q99. Residues 99–109 (QSPDINQGVDR) are flexible loop. ATP-binding positions include 164–166 (DAK), 230–231 (RF), D239, 245–246 (RK), A262, and K266. D239 contributes to the L-methionine binding site. L-methionine is bound at residue K270.

The protein belongs to the AdoMet synthase family. In terms of assembly, homotetramer; dimer of dimers. It depends on Mg(2+) as a cofactor. K(+) is required as a cofactor.

The protein localises to the cytoplasm. It carries out the reaction L-methionine + ATP + H2O = S-adenosyl-L-methionine + phosphate + diphosphate. It functions in the pathway amino-acid biosynthesis; S-adenosyl-L-methionine biosynthesis; S-adenosyl-L-methionine from L-methionine: step 1/1. Functionally, catalyzes the formation of S-adenosylmethionine (AdoMet) from methionine and ATP. The overall synthetic reaction is composed of two sequential steps, AdoMet formation and the subsequent tripolyphosphate hydrolysis which occurs prior to release of AdoMet from the enzyme. The protein is S-adenosylmethionine synthase of Shewanella baltica (strain OS155 / ATCC BAA-1091).